An 88-amino-acid polypeptide reads, in one-letter code: N-alpha-acetyltransferase 38, NatC auxiliary subunit (88 aa).

The Sm domain occupies 1 to 72 (MDILKLSDFI…VKTIMIDKPV (72 aa)).

In terms of assembly, component of the N-terminal acetyltransferase C (NatC) complex, composed of the catalytic subunit Naa30/MAK3, a large auxiliary subunit Naa35/MAK10 and a small auxiliary subunit Naa38/MAK31.

Its function is as follows. Component of the NatC N-terminal acetyltransferase, which associates with the ribosome to acetylate nascent protein chains in a cotranslational manner. NatC acetylates protein N-termini starting with methionine, followed by a hydrophobic or amphipathic amino acid, with amino acids at positions 3 and 4 also contributing to NatC recognition. The first 4 amino acids of cognate substrates are recognized at the Naa30/MAK3-Naa35/MAK10 interface. NatC-dependent acetylation targets various substrate proteins to specific subcellular sites, including isoform 2 of tRNA-specific methyltransferase Trm1 to the inner nuclear membrane. Catalyzes the acetylation of the N-terminal Met of ARF-like GTPase ARL3, which is required for its Golgi localization via interaction with the Golgi-localized integral membrane protein SYS1, which may serve as a receptor for acetylated ARL3. Catalyzes the acetylation of the N-terminal Met of L-A virus Gag protein. MAK31 is necessary for the structural stability of L-A double-stranded RNA-containing particles. Necessary for growth at 37 degrees Celsius as well as for maintenance of the killer plasmid. In Saccharomyces cerevisiae (strain ATCC 204508 / S288c) (Baker's yeast), this protein is N-alpha-acetyltransferase 38, NatC auxiliary subunit (MAK31).